A 206-amino-acid chain; its full sequence is Small ribosomal subunit protein uS4 (206 aa).

The 61-residue stretch at 96 to 156 (RRLDNVVYRM…DKSKNQSRIK (61 aa)) folds into the S4 RNA-binding domain.

It belongs to the universal ribosomal protein uS4 family. In terms of assembly, part of the 30S ribosomal subunit. Contacts protein S5. The interaction surface between S4 and S5 is involved in control of translational fidelity.

In terms of biological role, one of the primary rRNA binding proteins, it binds directly to 16S rRNA where it nucleates assembly of the body of the 30S subunit. Its function is as follows. With S5 and S12 plays an important role in translational accuracy. This is Small ribosomal subunit protein uS4 from Buchnera aphidicola subsp. Schizaphis graminum (strain Sg).